The following is a 380-amino-acid chain: Cystathionine beta-lyase (380 aa).

Position 196 is an N6-(pyridoxal phosphate)lysine (K196).

It belongs to the trans-sulfuration enzymes family. Pyridoxal 5'-phosphate serves as cofactor.

The protein resides in the cytoplasm. It catalyses the reaction L,L-cystathionine + H2O = L-homocysteine + pyruvate + NH4(+). It carries out the reaction an S-substituted L-cysteine + H2O = a thiol + pyruvate + NH4(+). Its pathway is amino-acid biosynthesis; L-methionine biosynthesis via de novo pathway; L-homocysteine from L-cystathionine: step 1/1. Its function is as follows. The enzymatic degradation of amino acids in cheese is believed to generate aroma compounds and therefore to be essential for flavor development. Cystathionine beta-lyase (CBL) can convert cystathionine to homocysteine but is also able to catalyze an alpha, gamma elimination. With methionine as a substrate, it produces volatile sulfur compounds which are important for flavor formation in Gouda cheese. The chain is Cystathionine beta-lyase (metC) from Lactococcus lactis subsp. lactis (strain IL1403) (Streptococcus lactis).